Consider the following 86-residue polypeptide: Small ribosomal subunit protein bS20 (86 aa).

The protein belongs to the bacterial ribosomal protein bS20 family.

Binds directly to 16S ribosomal RNA. The protein is Small ribosomal subunit protein bS20 of Buchnera aphidicola subsp. Cinara cedri (strain Cc).